Here is a 795-residue protein sequence, read N- to C-terminus: Levansucrase (795 aa).

The N-terminal stretch at Met1–Ala36 is a signal peptide. Composition is skewed to polar residues over residues Thr42 to Glu66 and Gln112 to Asn130. 2 disordered regions span residues Thr42–Ala83 and Glu103–Glu138. Sucrose-binding residues include Trp245, Asp246, and Ser315. The active-site Nucleophile is Asp246. Asp394 lines the Ca(2+) pocket. Sucrose contacts are provided by Arg399 and Asp400. Gln425, Asn464, and Asp496 together coordinate Ca(2+). Sucrose is bound at residue Glu497. Glu499 serves as the catalytic Proton donor/acceptor. Residue Arg517 participates in sucrose binding. A helical transmembrane segment spans residues Gly774–Phe794.

The protein belongs to the glycosyl hydrolase 68 family.

It is found in the cell membrane. Its subcellular location is the cell surface. The enzyme catalyses [6)-beta-D-fructofuranosyl-(2-&gt;](n) alpha-D-glucopyranoside + sucrose = [6)-beta-D-fructofuranosyl-(2-&gt;](n+1) alpha-D-glucopyranoside + D-glucose. With respect to regulation, ca(2+) may play an important structural role and promote stability of levansucrase. In terms of biological role, catalyzes the synthesis of levan, a fructose polymer, by transferring the fructosyl moiety from sucrose to a growing acceptor molecule. Also displays sucrose hydrolase activity. The chain is Levansucrase from Streptococcus mutans serotype c (strain ATCC 700610 / UA159).